Consider the following 342-residue polypeptide: Methylthioribose-1-phosphate isomerase (342 aa).

Residues 44-46, Arg-87, and Gln-194 each bind substrate; that span reads RGA. The active-site Proton donor is the Asp-235. 245 to 246 is a substrate binding site; sequence NK.

The protein belongs to the eIF-2B alpha/beta/delta subunits family. MtnA subfamily.

It catalyses the reaction 5-(methylsulfanyl)-alpha-D-ribose 1-phosphate = 5-(methylsulfanyl)-D-ribulose 1-phosphate. Its pathway is amino-acid biosynthesis; L-methionine biosynthesis via salvage pathway; L-methionine from S-methyl-5-thio-alpha-D-ribose 1-phosphate: step 1/6. Functionally, catalyzes the interconversion of methylthioribose-1-phosphate (MTR-1-P) into methylthioribulose-1-phosphate (MTRu-1-P). The sequence is that of Methylthioribose-1-phosphate isomerase from Acetivibrio thermocellus (strain ATCC 27405 / DSM 1237 / JCM 9322 / NBRC 103400 / NCIMB 10682 / NRRL B-4536 / VPI 7372) (Clostridium thermocellum).